A 465-amino-acid chain; its full sequence is UDP-glucose:undecaprenyl-phosphate glucose-1-phosphate transferase (465 aa).

The next 5 membrane-spanning stretches (helical) occupy residues 23–43 (FSDI…NDYF), 46–66 (LHYV…GGIT), 82–102 (ILIL…VTLF), 105–125 (FDLT…GFVV), and 280–300 (IIVS…IATA).

Belongs to the bacterial sugar transferase family.

The protein localises to the cell inner membrane. It catalyses the reaction di-trans,octa-cis-undecaprenyl phosphate + UDP-alpha-D-glucose = alpha-D-glucosyl di-trans,octa-cis-undecaprenyl diphosphate + UMP. The protein operates within capsule biogenesis; capsule polysaccharide biosynthesis. In terms of biological role, is likely the initiating enzyme for the K2 capsular polysaccharide synthesis. Catalyzes the transfer of the glucose-1-phosphate moiety from UDP-Glc onto the carrier lipid undecaprenyl phosphate (C55-P), forming a phosphoanhydride bond yielding to glucosyl-pyrophosphoryl-undecaprenol (Glc-PP-C55). The sequence is that of UDP-glucose:undecaprenyl-phosphate glucose-1-phosphate transferase from Klebsiella pneumoniae.